Consider the following 481-residue polypeptide: MEESDTTKYVIHAHISAEGVVERPDVVGAVFGQTEGLLGADLDLRELQKTGRIGRIEVNITSKYGKSNGNILIPSSLDKVETSILAAALETIDRVGPCISKITVTKIEDVRSSKRKQIIDRAKHILTDMFDNSVPESQEITDAVKAAVRVEEVTFIDNLPAGPNVLDSDAILVVEGRADVLNLLKYGIKNAIAVEGTNVPQLVAELSKKKTVTVFTDGDRGGELILKELLQVADVDYVARAPDGKGVEELTQKEVVKSLRSKVPVEQVIEVPQGRRRNKLAAQAAEKQAQAEAAQKAEAPAAAAPVQPQREYQQKEYPQRESRERSEQPRGEVPRRKSLRRTEEQQERPERPERSERAERREYRERREYREPREPREQREQAPARKEREPSEFDEMMKELSGTLSARLLDANKNVINTVAVRDLANTLKESNGDVKSVVFDGVITQRMLDIAAEKNLETLVGVKMGSVVKQPAGVKVITTE.

The Toprim domain maps to 169-243; sequence DAILVVEGRA…DVDYVARAPD (75 aa). The Mg(2+) site is built by Glu175, Asp217, and Asp219. The tract at residues 275–393 is disordered; it reads RRRNKLAAQA…ARKEREPSEF (119 aa). A compositionally biased stretch (low complexity) spans 281–309; it reads AAQAAEKQAQAEAAQKAEAPAAAAPVQPQ. Residues 312 to 393 show a composition bias toward basic and acidic residues; sequence YQQKEYPQRE…ARKEREPSEF (82 aa).

The protein belongs to the archaeal DnaG primase family. In terms of assembly, forms a ternary complex with MCM helicase and DNA. Component of the archaeal exosome complex. The cofactor is Mg(2+).

The enzyme catalyses ssDNA + n NTP = ssDNA/pppN(pN)n-1 hybrid + (n-1) diphosphate.. Its function is as follows. RNA polymerase that catalyzes the synthesis of short RNA molecules used as primers for DNA polymerase during DNA replication. Also part of the exosome, which is a complex involved in RNA degradation. Acts as a poly(A)-binding protein that enhances the interaction between heteromeric, adenine-rich transcripts and the exosome. This Methanocella arvoryzae (strain DSM 22066 / NBRC 105507 / MRE50) protein is DNA primase DnaG.